The chain runs to 370 residues: Protein PAM71, chloroplastic (370 aa).

Residues 1-38 (MLSLNLSESLRIPFQNPRPPKSDFSSTSSSPSSSSRRC) are disordered. The N-terminal 73 residues, 1–73 (MLSLNLSESL…RNESQQLGFR (73 aa)), are a transit peptide targeting the chloroplast. Residues 22-38 (SDFSSTSSSPSSSSRRC) are compositionally biased toward low complexity. At 74–113 (CFQRNDAACYLEKAESEEHDRNLDVLVESSIAHSRREIQR) the chain is on the stromal side. Residues 114–134 (VLMFLAVSGSVALLGTDPAFA) traverse the membrane as a helical segment. The Lumenal, thylakoid portion of the chain corresponds to 135-161 (ASSIPNVTQSLVTSFGDLGDISSGFAS). A helical transmembrane segment spans residues 162-182 (AFLLIFFSELGDKTFFIAALL). Residues 183-188 (AARNSA) lie on the Stromal side of the membrane. Residues 189–209 (ATVFVGTFGALGIMTIISVVL) form a helical membrane-spanning segment. The Lumenal, thylakoid segment spans residues 210 to 228 (GRTFHYVDEVLPFRFGGTD). Residues 229 to 249 (LPIDDIAAVCLLVYFGVSTLL) form a helical membrane-spanning segment. Residues 250-275 (DAVSDEGKADEEQKEAELAVSELSGN) are Stromal-facing. A helical membrane pass occupies residues 276–296 (GAGIVAAANTIISTFALVFVA). The Lumenal, thylakoid segment spans residues 297 to 315 (EWGDKSFFSTIALAAASSP). Residues 316-336 (LGVIAGALAGHGAATLLAVLG) form a helical membrane-spanning segment. Residues 337–348 (GSLLGNFLSEKA) lie on the Stromal side of the membrane. The chain crosses the membrane as a helical span at residues 349–369 (IAYVGGVLFLVFAAVTVAEIV). A topological domain (lumenal, thylakoid) is located at residue T370.

It belongs to the GDT1 family. In terms of assembly, homodimer.

Its subcellular location is the plastid. It localises to the chloroplast membrane. The protein localises to the thylakoid. Mn(2+)/H(+) exchanger, which transport Mn(2+)from the chloroplast stroma into the acidic thylakoid lumen. Might be a chloroplast-localized Ca(2+)/H(+) antiporter. Regulates Ca(2+), Mn(2+) and pH homeostasis. Required for chloroplast development. This is Protein PAM71, chloroplastic from Arabidopsis thaliana (Mouse-ear cress).